The sequence spans 72 residues: Translational regulator CsrA (72 aa).

It belongs to the CsrA/RsmA family. In terms of assembly, homodimer; the beta-strands of each monomer intercalate to form a hydrophobic core, while the alpha-helices form wings that extend away from the core.

It is found in the cytoplasm. Functionally, a translational regulator that binds mRNA to regulate translation initiation and/or mRNA stability. Usually binds in the 5'-UTR at or near the Shine-Dalgarno sequence preventing ribosome-binding, thus repressing translation. Its main target seems to be the major flagellin gene, while its function is anatagonized by FliW. The sequence is that of Translational regulator CsrA from Clostridium botulinum (strain Loch Maree / Type A3).